The primary structure comprises 309 residues: Olfactory receptor 5H2 (309 aa).

Residues 1-28 (MEQDNTTLLTEFVLTGLTYQPEWKMPLF) are Extracellular-facing. Asparagine 5 carries an N-linked (GlcNAc...) asparagine glycan. A helical transmembrane segment spans residues 29-49 (LVFLVIYLITIVWNLGLIALI). Residues 50 to 56 (WNDPQLH) are Cytoplasmic-facing. A helical membrane pass occupies residues 57–77 (IPMYFFLGSLAFVDAWISSTV). Residues 78 to 97 (TPKMLVNFLAKNRMISLSEC) are Extracellular-facing. Cysteine 97 and cysteine 179 are joined by a disulfide. A helical transmembrane segment spans residues 98-118 (MIQFFSFAFGGTTECFLLATM). At 119–143 (AYDRYVAICKPLLYPVIMNNSLCIR) the chain is on the cytoplasmic side. Residues 144-164 (LLAFSFLGGFLHALIHEVLIF) form a helical membrane-spanning segment. Residues 165 to 193 (RLTFCNSNIIHHFYCDIIPLFMISCTDPS) are Extracellular-facing. The chain crosses the membrane as a helical span at residues 194 to 214 (INFLMVFILSGSIQVFTIVTV). Topologically, residues 215–239 (LNSYTFALFTILKKKSVRGVRKAFS) are cytoplasmic. The helical transmembrane segment at 240 to 260 (TCGAHLLSVSLYYGPLIFMYL) threads the bilayer. Residues 261-271 (RPASPQADDQD) lie on the Extracellular side of the membrane. The helical transmembrane segment at 272–292 (MIDSVFYTIIIPLLNPIIYSL) threads the bilayer. The Cytoplasmic portion of the chain corresponds to 293–309 (RNKQVIDSFTKMVKRNV).

The protein belongs to the G-protein coupled receptor 1 family.

The protein localises to the cell membrane. Functionally, odorant receptor. In Homo sapiens (Human), this protein is Olfactory receptor 5H2 (OR5H2).